A 116-amino-acid chain; its full sequence is Mercuric transport protein MerT (116 aa).

Helical transmembrane passes span 16–36 and 46–66; these read LAAI…ALGF and VLEP…FFAW. Hg(2+) is bound by residues C24 and C25. The Hg(2+) site is built by C76 and C82. Residues 94–114 traverse the membrane as a helical segment; that stretch reads IFWFVAVLVLVALGFPYVMPF.

It belongs to the MerT family.

The protein localises to the cell inner membrane. Functionally, involved in mercury resistance. Probably transfers a mercuric ion from the periplasmic Hg(2+)-binding protein MerP to the cytoplasmic mercuric reductase MerA. This chain is Mercuric transport protein MerT, found in Acinetobacter calcoaceticus.